Here is a 1033-residue protein sequence, read N- to C-terminus: Probable beta-glucosidase E (1033 aa).

The segment at 1–71 is disordered; it reads MAPPDSTHGG…RSGSYKLRPV (71 aa). Residues 1-161 lie on the Cytoplasmic side of the membrane; sequence MAPPDSTHGG…PVKYARIWWR (161 aa). Composition is skewed to basic and acidic residues over residues 11 to 20 and 59 to 71; these read SFRDHLKTND and DLERSGSYKLRPV. A helical; Signal-anchor for type II membrane protein membrane pass occupies residues 162–182; it reads TLLAVVVTLVVVVWGFLSFAV. The Extracellular segment spans residues 183–1033; sequence SHREEPTVWP…SRDLPLMGEY (851 aa). N-linked (GlcNAc...) asparagine glycosylation is found at asparagine 224, asparagine 232, and asparagine 418. Residue aspartate 446 is part of the active site. Asparagine 489, asparagine 528, asparagine 593, asparagine 909, asparagine 918, and asparagine 976 each carry an N-linked (GlcNAc...) asparagine glycan.

It belongs to the glycosyl hydrolase 3 family.

Its subcellular location is the cell membrane. The catalysed reaction is Hydrolysis of terminal, non-reducing beta-D-glucosyl residues with release of beta-D-glucose.. The protein operates within glycan metabolism; cellulose degradation. Functionally, beta-glucosidases are one of a number of cellulolytic enzymes involved in the degradation of cellulosic biomass. Catalyzes the last step releasing glucose from the inhibitory cellobiose. The polypeptide is Probable beta-glucosidase E (bglE) (Aspergillus fumigatus (strain CBS 144.89 / FGSC A1163 / CEA10) (Neosartorya fumigata)).